Here is a 95-residue protein sequence, read N- to C-terminus: uncharacterized protein (95 aa).

This is an uncharacterized protein from Methanocaldococcus jannaschii (strain ATCC 43067 / DSM 2661 / JAL-1 / JCM 10045 / NBRC 100440) (Methanococcus jannaschii).